We begin with the raw amino-acid sequence, 481 residues long: Leukocyte immunoglobulin-like receptor subfamily A member 6 (481 aa).

Positions Met-1 to Ala-23 are cleaved as a signal peptide. The Ig-like C2-type 1 domain maps to Gly-24–Thr-118. Residues Gly-24–Asn-447 lie on the Extracellular side of the membrane. Cysteines 49 and 98 form a disulfide. Residue Asn-139 is glycosylated (N-linked (GlcNAc...) asparagine). Cystine bridges form between Cys-144/Cys-196 and Cys-245/Cys-296. Ig-like C2-type domains follow at residues Pro-225–Asn-314 and Asp-323–Ser-408. 2 N-linked (GlcNAc...) asparagine glycosylation sites follow: Asn-301 and Asn-340. A disulfide bridge links Cys-345 with Cys-396. The interval Val-418–His-439 is disordered. Residues Ser-426–Thr-435 are compositionally biased toward pro residues. Residues Leu-448–Ala-468 traverse the membrane as a helical segment. Residues Gln-469–Arg-481 lie on the Cytoplasmic side of the membrane.

It is found in the membrane. Its function is as follows. May act as receptor for class I MHC antigens. The chain is Leukocyte immunoglobulin-like receptor subfamily A member 6 (LILRA6) from Pan troglodytes (Chimpanzee).